Here is a 638-residue protein sequence, read N- to C-terminus: Golgin subfamily A member 8S (638 aa).

Positions 1–11 (MWPQARLPPHP) are enriched in pro residues. The disordered stretch occupies residues 1–84 (MWPQARLPPH…GESPTSSATL (84 aa)). Over residues 50 to 62 (TNGSIHETATSGG) the composition is skewed to polar residues. Coiled-coil stretches lie at residues 105 to 160 (VSQL…LNTD), 223 to 275 (LEQS…MSQE), and 318 to 417 (EAEL…QQKQ). 3 disordered regions span residues 427 to 453 (ALPGEGDGGGHLDSEGEEAPRPIPSIP), 510 to 532 (KDAALGGGHHQAGAQGGDEDEAA), and 556 to 575 (AHNPADEPGPGAPAPQELGA). The segment covering 434–446 (GGGHLDSEGEEAP) has biased composition (basic and acidic residues). Gly residues predominate over residues 514–525 (LGGGHHQAGAQG). Low complexity predominate over residues 561-574 (DEPGPGAPAPQELG).

It belongs to the GOLGA8 family.

The sequence is that of Golgin subfamily A member 8S from Homo sapiens (Human).